The following is a 728-amino-acid chain: Rho-related BTB domain-containing protein 2 (728 aa).

The rho-like stretch occupies residues 1-210; the sequence is MDSDMDYERP…DNAIRAALIS (210 aa). GTP is bound by residues 21–28, 84–88, and 140–143; these read GDNAVGKT, DTFGD, and CQLD. BTB domains follow at residues 266–333 and 500–567; these read ADVI…HHHH and SDVT…TSSP. Residues 304 to 313 are compositionally biased toward gly residues; sequence ELGGPSGSGG. Positions 304-333 are disordered; the sequence is ELGGPSGSGGPRPEDHRSHPEQHHHHHHHH. The segment covering 315-324 has biased composition (basic and acidic residues); it reads RPEDHRSHPE. The disordered stretch occupies residues 703–728; the sequence is FWNSPSSPSSSAAGSASPSSSSSAVV. Residues 706–728 show a composition bias toward low complexity; sequence SPSSPSSSAAGSASPSSSSSAVV.

The protein belongs to the small GTPase superfamily. Rho family. As to quaternary structure, interacts with HSP90AA1 and HSP90AB1. Forms a complex with CUL3 and RBX1. Interacts (via BTB 1 domain) with CUL3. Interacts with MSI2. Autoubiquitinated by RHOBTB2-CUL3-RBX1 ubiquitin ligase complex. As to expression, expressed in most tissues, with highest expression in brain.

Regulator of cell proliferation and apoptosis. It likely functions as a substrate-adapter that recruits key substrates, e.g. MSI2, to CUL3-based ubiquitin ligase complexes for degradation. Required for MSI2 ubiquitination and degradation. The protein is Rho-related BTB domain-containing protein 2 (Rhobtb2) of Mus musculus (Mouse).